Consider the following 365-residue polypeptide: TD and POZ domain-containing protein 3 (365 aa).

In terms of domain architecture, MATH spans 19-149; the sequence is KFCYNWTISN…EDQFTICCKV (131 aa). Residues 188-250 form the BTB domain; it reads TDCCLLVAGH…EMMGFIYTGK (63 aa).

It belongs to the Tdpoz family.

The protein is TD and POZ domain-containing protein 3 of Mus musculus (Mouse).